Reading from the N-terminus, the 546-residue chain is Methionine--tRNA ligase (546 aa).

The 'HIGH' region signature appears at P15–H25. 4 residues coordinate Zn(2+): C146, C149, C159, and C162. The 'KMSKS' region signature appears at K332–S336. ATP is bound at residue K335.

It belongs to the class-I aminoacyl-tRNA synthetase family. MetG type 1 subfamily. In terms of assembly, monomer. The cofactor is Zn(2+).

It is found in the cytoplasm. It carries out the reaction tRNA(Met) + L-methionine + ATP = L-methionyl-tRNA(Met) + AMP + diphosphate. In terms of biological role, is required not only for elongation of protein synthesis but also for the initiation of all mRNA translation through initiator tRNA(fMet) aminoacylation. The sequence is that of Methionine--tRNA ligase from Coxiella burnetii (strain RSA 331 / Henzerling II).